Consider the following 437-residue polypeptide: GTPase Obg (437 aa).

The region spanning 2 to 160 is the Obg domain; it reads SMFLDTAKIS…RQLELELKIL (159 aa). Residues 161-338 enclose the OBG-type G domain; sequence ADVGLVGFPS…LLEATAELLA (178 aa). Residues 167 to 174, 192 to 196, 214 to 217, 284 to 287, and 319 to 321 contribute to the GTP site; these read GFPSVGKS, FTTIV, DLPG, NKMD, and SSL. Ser-174 and Thr-194 together coordinate Mg(2+). One can recognise an OCT domain in the interval 359-437; that stretch reads GFAETEKDFE…IGKFEFEFVD (79 aa).

The protein belongs to the TRAFAC class OBG-HflX-like GTPase superfamily. OBG GTPase family. In terms of assembly, monomer. Mg(2+) serves as cofactor.

Its subcellular location is the cytoplasm. Functionally, an essential GTPase which binds GTP, GDP and possibly (p)ppGpp with moderate affinity, with high nucleotide exchange rates and a fairly low GTP hydrolysis rate. Plays a role in control of the cell cycle, stress response, ribosome biogenesis and in those bacteria that undergo differentiation, in morphogenesis control. This is GTPase Obg from Streptococcus pyogenes serotype M5 (strain Manfredo).